Here is a 333-residue protein sequence, read N- to C-terminus: Protein XAP5 CIRCADIAN TIMEKEEPER (333 aa).

Coiled coils occupy residues 12-43 and 70-116; these read AQDA…SDGQ and TREQ…VRGD. Basic and acidic residues predominate over residues 89 to 98; that stretch reads EKEKLQKLQQ. The interval 89–171 is disordered; sequence EKEKLQKLQQ…REREAEEQAE (83 aa). Acidic residues predominate over residues 123-136; sequence DEIENGSDEDEFEN. Residues 160-171 are compositionally biased toward basic and acidic residues; it reads PDREREAEEQAE.

Belongs to the FAM50 family.

It localises to the nucleus. Involved in light regulation of the circadian clock and photomorphogenesis. This Oryza sativa subsp. indica (Rice) protein is Protein XAP5 CIRCADIAN TIMEKEEPER (XCT).